A 138-amino-acid chain; its full sequence is Protein FAM136A (138 aa).

A2 carries the N-acetylalanine modification. Phosphothreonine is present on residues T124 and T126.

The protein belongs to the FAM136 family.

This chain is Protein FAM136A (Fam136a), found in Mus musculus (Mouse).